We begin with the raw amino-acid sequence, 342 residues long: Deoxyhypusine synthase regulatory subunit (342 aa).

NAD(+) is bound by residues 72 to 76, 98 to 100, Glu-104, Asp-213, 282 to 283, and 316 to 317; these read SNLIS, TAG, TG, and DA.

The protein belongs to the deoxyhypusine synthase family. Heterotetramer formed by a homodimer of the non-catalytic regulatory subunit DHSp and a homodimer of the catalytic subunit DHSc where DHSc appears to bind spermidine and DHSp appears to bind NAD(+).

The protein operates within protein modification; eIF5A hypusination. In terms of biological role, required for the activation and stability of deoxyhypusine synthase DHSc. Required for cell growth and survival. The chain is Deoxyhypusine synthase regulatory subunit from Trypanosoma brucei brucei (strain 927/4 GUTat10.1).